Reading from the N-terminus, the 232-residue chain is Ornithine carbamoyltransferase (232 aa).

Residues Q15, R39, and 66-69 contribute to the carbamoyl phosphate site; that span reads HPTQ. L-ornithine is bound by residues N99, D163, and 167–168; that span reads SM. Carbamoyl phosphate-binding positions include 204-207 and T232; that span reads HCLP.

This sequence belongs to the aspartate/ornithine carbamoyltransferase superfamily. OTCase family.

It localises to the cytoplasm. It carries out the reaction carbamoyl phosphate + L-ornithine = L-citrulline + phosphate + H(+). It participates in amino-acid biosynthesis; L-arginine biosynthesis; L-arginine from L-ornithine and carbamoyl phosphate: step 1/3. In terms of biological role, reversibly catalyzes the transfer of the carbamoyl group from carbamoyl phosphate (CP) to the N(epsilon) atom of ornithine (ORN) to produce L-citrulline. This is Ornithine carbamoyltransferase (argF) from Neisseria subflava.